Consider the following 474-residue polypeptide: tRNA-2-methylthio-N(6)-dimethylallyladenosine synthase (474 aa).

One can recognise an MTTase N-terminal domain in the interval 3–120 (KKLLIKTWGC…LPEMIRQSQS (118 aa)). Residues Cys12, Cys49, Cys83, Cys157, Cys161, and Cys164 each coordinate [4Fe-4S] cluster. The region spanning 143 to 375 (KAEGATAFVS…QQQVNSQAMR (233 aa)) is the Radical SAM core domain. The TRAM domain occupies 378–441 (RLMLDTEQRV…ANSLRGELVR (64 aa)).

The protein belongs to the methylthiotransferase family. MiaB subfamily. As to quaternary structure, monomer. [4Fe-4S] cluster serves as cofactor.

It localises to the cytoplasm. The catalysed reaction is N(6)-dimethylallyladenosine(37) in tRNA + (sulfur carrier)-SH + AH2 + 2 S-adenosyl-L-methionine = 2-methylsulfanyl-N(6)-dimethylallyladenosine(37) in tRNA + (sulfur carrier)-H + 5'-deoxyadenosine + L-methionine + A + S-adenosyl-L-homocysteine + 2 H(+). Its function is as follows. Catalyzes the methylthiolation of N6-(dimethylallyl)adenosine (i(6)A), leading to the formation of 2-methylthio-N6-(dimethylallyl)adenosine (ms(2)i(6)A) at position 37 in tRNAs that read codons beginning with uridine. In Aliivibrio fischeri (strain ATCC 700601 / ES114) (Vibrio fischeri), this protein is tRNA-2-methylthio-N(6)-dimethylallyladenosine synthase.